A 551-amino-acid chain; its full sequence is Tetrachloroethene reductive dehalogenase (551 aa).

Positions Met1–Ala39 form a signal peptide, tat-type signal. The 4Fe-4S ferredoxin-type 1 domain maps to Pro411 to Asp440. [4Fe-4S] cluster contacts are provided by Cys420, Cys423, Cys426, Cys430, Cys467, Cys478, Cys481, and Cys485. The 4Fe-4S ferredoxin-type 2 domain maps to Cys478 to Asp496.

Belongs to the PceA family. [4Fe-4S] cluster serves as cofactor. The cofactor is corrinoid. Predicted to be exported by the Tat system. The position of the signal peptide cleavage has not been experimentally proven.

The protein resides in the cell membrane. It carries out the reaction trichloroethene + chloride + A + H(+) = tetrachloroethene + AH2. The enzyme catalyses trichloroethene + AH2 = (Z)-1,2-dichloroethene + chloride + A + H(+). Functionally, catalyzes the reductive dechlorination of tetrachloroethene (PCE) to trichloroethene (TCE) and of trichloroethene to cis-1,2-dichloroethene (DCE). The polypeptide is Tetrachloroethene reductive dehalogenase (Desulfitobacterium hafniense (Desulfitobacterium frappieri)).